Consider the following 905-residue polypeptide: Protein translocase subunit SecA (905 aa).

ATP-binding positions include Gln87, 105–109 (GEGKT), and Asp512. The segment at 840 to 905 (AQRQQEAMAQ…HCHGSKARYA (66 aa)) is disordered. The segment covering 843–852 (QQEAMAQAES) has biased composition (low complexity). Over residues 853–862 (ENYRTADHQA) the composition is skewed to basic and acidic residues. The segment covering 863–874 (EAQQSESLTEEQ) has biased composition (polar residues). Zn(2+)-binding residues include Cys886, Cys888, Cys897, and His898. Positions 892 to 905 (KKYKHCHGSKARYA) are enriched in basic residues.

It belongs to the SecA family. Monomer and homodimer. Part of the essential Sec protein translocation apparatus which comprises SecA, SecYEG and auxiliary proteins SecDF-YajC and YidC. Zn(2+) is required as a cofactor.

The protein resides in the cell inner membrane. The protein localises to the cytoplasm. It carries out the reaction ATP + H2O + cellular proteinSide 1 = ADP + phosphate + cellular proteinSide 2.. Its function is as follows. Part of the Sec protein translocase complex. Interacts with the SecYEG preprotein conducting channel. Has a central role in coupling the hydrolysis of ATP to the transfer of proteins into and across the cell membrane, serving both as a receptor for the preprotein-SecB complex and as an ATP-driven molecular motor driving the stepwise translocation of polypeptide chains across the membrane. The polypeptide is Protein translocase subunit SecA (Actinobacillus pleuropneumoniae serotype 3 (strain JL03)).